The chain runs to 124 residues: Probable glycine cleavage system H protein (124 aa).

A Lipoyl-binding domain is found at Thr25–Ala106. The residue at position 66 (Lys66) is an N6-lipoyllysine.

It belongs to the GcvH family. In terms of assembly, the glycine cleavage system is composed of four proteins: P, T, L and H. (R)-lipoate serves as cofactor.

The glycine cleavage system catalyzes the degradation of glycine. The H protein shuttles the methylamine group of glycine from the P protein to the T protein. The sequence is that of Probable glycine cleavage system H protein from Thermoplasma acidophilum (strain ATCC 25905 / DSM 1728 / JCM 9062 / NBRC 15155 / AMRC-C165).